Reading from the N-terminus, the 181-residue chain is CASP-like protein 2C1 (181 aa).

Over Met-1–Lys-7 the chain is Cytoplasmic. Residues Ile-8 to Gly-28 traverse the membrane as a helical segment. The Extracellular segment spans residues Leu-29 to His-49. A helical membrane pass occupies residues Ala-50 to Cys-70. The Cytoplasmic segment spans residues Arg-71–Gln-98. A helical transmembrane segment spans residues Leu-99–Ile-119. Over Thr-120–Gln-140 the chain is Extracellular. Residues Ile-141–Ile-161 traverse the membrane as a helical segment. The Cytoplasmic segment spans residues Ser-162 to Thr-181.

The protein belongs to the Casparian strip membrane proteins (CASP) family. Homodimer and heterodimers.

The protein resides in the cell membrane. The chain is CASP-like protein 2C1 from Populus trichocarpa (Western balsam poplar).